The primary structure comprises 514 residues: Glucose-1-phosphate adenylyltransferase small subunit 2, chloroplastic/amyloplastic/cytosolic (514 aa).

The N-terminal 64 residues, 1-64, are a transit peptide targeting the chloroplast; sequence MAMAAAMGVA…RRRPLVFSPR (64 aa). The interval 35 to 74 is disordered; it reads RPRRPRGVASSSSSSSSAGRRRRPLVFSPRAVSDSKSSQT. Residues 41-52 are compositionally biased toward low complexity; that stretch reads GVASSSSSSSSA.

The protein belongs to the bacterial/plant glucose-1-phosphate adenylyltransferase family. In terms of assembly, heterotetramer composed of two small and two large subunits. In terms of tissue distribution, expressed in leaves.

It localises to the plastid. The protein localises to the chloroplast. Its subcellular location is the amyloplast. It is found in the cytoplasm. The protein resides in the cytosol. It catalyses the reaction alpha-D-glucose 1-phosphate + ATP + H(+) = ADP-alpha-D-glucose + diphosphate. It functions in the pathway glycan biosynthesis; starch biosynthesis. With respect to regulation, activated by 3'phosphoglycerate, inhibited by orthophosphate. Allosteric regulation. Inhibited by inorganic phosphate (Pi). In terms of biological role, involved in synthesis of starch. Catalyzes the synthesis of ADP-glucose, a molecule that serves as an activated glycosyl donor for alpha-1,4-glucan synthesis. The chloroplastic isoform 1 is essential for starch synthesis in leaf chloroplasts and the cytosolic isoform 2 for synthesis in seed endosperm. The chain is Glucose-1-phosphate adenylyltransferase small subunit 2, chloroplastic/amyloplastic/cytosolic from Oryza sativa subsp. japonica (Rice).